A 327-amino-acid polypeptide reads, in one-letter code: Cobalamin biosynthesis protein CobD (327 aa).

Transmembrane regions (helical) follow at residues 60 to 80 (GMWL…VLEL), 82 to 102 (LPFA…VLLA), 159 to 179 (DGIV…LFAY), and 304 to 324 (LFWS…LIGL).

Belongs to the CobD/CbiB family.

It is found in the cell membrane. It functions in the pathway cofactor biosynthesis; adenosylcobalamin biosynthesis. Functionally, converts cobyric acid to cobinamide by the addition of aminopropanol on the F carboxylic group. This chain is Cobalamin biosynthesis protein CobD, found in Brucella anthropi (strain ATCC 49188 / DSM 6882 / CCUG 24695 / JCM 21032 / LMG 3331 / NBRC 15819 / NCTC 12168 / Alc 37) (Ochrobactrum anthropi).